The primary structure comprises 192 residues: Glycerol-3-phosphate acyltransferase (192 aa).

5 helical membrane-spanning segments follow: residues 1–21 (MFIA…AYIL), 49–69 (GLAG…IYSL), 80–100 (ELCI…WLKF), 110–130 (IGVI…SWLF), and 143–163 (IVSI…VVAL).

It belongs to the PlsY family. In terms of assembly, probably interacts with PlsX.

It is found in the cell inner membrane. It catalyses the reaction an acyl phosphate + sn-glycerol 3-phosphate = a 1-acyl-sn-glycero-3-phosphate + phosphate. It functions in the pathway lipid metabolism; phospholipid metabolism. Its function is as follows. Catalyzes the transfer of an acyl group from acyl-phosphate (acyl-PO(4)) to glycerol-3-phosphate (G3P) to form lysophosphatidic acid (LPA). This enzyme utilizes acyl-phosphate as fatty acyl donor, but not acyl-CoA or acyl-ACP. This Anaplasma phagocytophilum (strain HZ) protein is Glycerol-3-phosphate acyltransferase.